Reading from the N-terminus, the 346-residue chain is 3 beta-hydroxysteroid dehydrogenase/Delta 5--&gt;4-isomerase (346 aa).

The Proton acceptor role is filled by Tyr-147. Lys-151 serves as a coordination point for NAD(+).

Belongs to the 3-beta-HSD family.

It carries out the reaction a 3beta-hydroxy-Delta(5)-steroid + NAD(+) = a 3-oxo-Delta(5)-steroid + NADH + H(+). The enzyme catalyses a 3-oxo-Delta(5)-steroid = a 3-oxo-Delta(4)-steroid. Its pathway is lipid metabolism; steroid biosynthesis. Catalyzes the oxidative conversion of Delta(5)-ene-3-beta-hydroxy steroid, and the oxidative conversion of ketosteroids. The 3-beta-HSD enzymatic system plays a crucial role in the biosynthesis of all classes of hormonal steroids. During viral infection, steroid production contributes to virulence by inhibiting the host inflammatory response. This Monkeypox virus protein is 3 beta-hydroxysteroid dehydrogenase/Delta 5--&gt;4-isomerase (OPG174).